A 539-amino-acid polypeptide reads, in one-letter code: Phosphoenolpyruvate carboxykinase (ATP) (539 aa).

The substrate site is built by R64, Y206, and K212. ATP contacts are provided by residues K212, H231, and 247-255; that span reads GLSGTGKTT. Residues K212 and H231 each coordinate Mn(2+). D268 is a binding site for Mn(2+). ATP-binding positions include E296, R332, 448 to 449, and T454; that span reads RI. Residue R332 coordinates substrate.

It belongs to the phosphoenolpyruvate carboxykinase (ATP) family. Monomer. The cofactor is Mn(2+).

The protein resides in the cytoplasm. The enzyme catalyses oxaloacetate + ATP = phosphoenolpyruvate + ADP + CO2. Its pathway is carbohydrate biosynthesis; gluconeogenesis. Involved in the gluconeogenesis. Catalyzes the conversion of oxaloacetate (OAA) to phosphoenolpyruvate (PEP) through direct phosphoryl transfer between the nucleoside triphosphate and OAA. This Erwinia tasmaniensis (strain DSM 17950 / CFBP 7177 / CIP 109463 / NCPPB 4357 / Et1/99) protein is Phosphoenolpyruvate carboxykinase (ATP).